Consider the following 254-residue polypeptide: Ferritin, chloroplastic (254 aa).

A chloroplast-targeting transit peptide spans 1–48 (MALAPSKVSPFSGFSLSDGVGAVRNPTCSVSLSFLNKKVGSRNLGVSA). Residues 49–81 (STVPLTGVIFEPFEEVKKEELAVPTAGQVSLAR) are extension peptide (EP). One can recognise a Ferritin-like diiron domain in the interval 82–235 (QYYADECESA…EYVAQLRMVG (154 aa)). 5 residues coordinate Fe cation: glutamate 99, glutamate 134, histidine 137, glutamate 183, and glutamine 217.

It belongs to the ferritin family. In terms of assembly, oligomer of 24 subunits. There are two types of subunits: L (light) chain and H (heavy) chain. The major chain can be light or heavy, depending on the species and tissue type. The functional molecule forms a roughly spherical shell with a diameter of 12 nm and contains a central cavity into which the insoluble mineral iron core is deposited.

It is found in the plastid. The protein resides in the chloroplast. The enzyme catalyses 4 Fe(2+) + O2 + 4 H(+) = 4 Fe(3+) + 2 H2O. Functionally, stores iron in a soluble, non-toxic, readily available form. Important for iron homeostasis. Has ferroxidase activity. Iron is taken up in the ferrous form and deposited as ferric hydroxides after oxidation. The polypeptide is Ferritin, chloroplastic (PFE) (Phaseolus vulgaris (Kidney bean)).